Reading from the N-terminus, the 128-residue chain is Lymphocyte antigen 6D (128 aa).

The signal sequence occupies residues 1–20 (MKTVLLFLVALAAAAGPAQA). Positions 21 to 108 (LRCHVCTSSS…WQSAAPARTS (88 aa)) constitute a UPAR/Ly6 domain. 5 disulfide bridges follow: Cys23–Cys45, Cys26–Cys32, Cys38–Cys63, Cys67–Cys86, and Cys87–Cys92. Ser98 carries the GPI-anchor amidated serine lipid modification. Residues 99 to 128 (WQSAAPARTSAHLGLALACGLLALLWAPGL) constitute a propeptide, removed in mature form.

It localises to the cell membrane. May act as a specification marker at earliest stage specification of lymphocytes between B- and T-cell development. Marks the earliest stage of B-cell specification. In Bos taurus (Bovine), this protein is Lymphocyte antigen 6D (LY6D).